We begin with the raw amino-acid sequence, 169 residues long: Small ribosomal subunit protein uS13c (169 aa).

The N-terminal 47 residues, 1-47, are a transit peptide targeting the chloroplast; it reads MAQMVAMPVAHSLSLICNWAKSNPLSRNTLALPASNTPNKQSLSIRC.

The protein belongs to the universal ribosomal protein uS13 family. In terms of assembly, part of the 30S ribosomal subunit.

It localises to the plastid. The protein localises to the chloroplast. In terms of biological role, located at the top of the head of the 30S subunit, it contacts several helices of the 16S rRNA. This Arabidopsis thaliana (Mouse-ear cress) protein is Small ribosomal subunit protein uS13c (RPS13).